The sequence spans 260 residues: 5'-nucleotidase SurE (260 aa).

The a divalent metal cation site is built by Asp8, Asp9, Ser39, and Asn96.

It belongs to the SurE nucleotidase family. A divalent metal cation is required as a cofactor.

The protein localises to the cytoplasm. It catalyses the reaction a ribonucleoside 5'-phosphate + H2O = a ribonucleoside + phosphate. Nucleotidase that shows phosphatase activity on nucleoside 5'-monophosphates. This chain is 5'-nucleotidase SurE, found in Moorella thermoacetica (strain ATCC 39073 / JCM 9320).